Reading from the N-terminus, the 85-residue chain is U4-theraphotoxin-Hhn1s (85 aa).

An N-terminal signal peptide occupies residues 1 to 22 (MKVTLIAILTCAAVLVLHTTAA). The propeptide occupies 23-48 (EELEAESQLMEVGMPDTELAAVDEER). Disulfide bonds link Cys-52–Cys-66, Cys-56–Cys-77, and Cys-71–Cys-82.

The protein belongs to the neurotoxin 12 (Hwtx-2) family. 02 (Hwtx-2) subfamily. As to expression, expressed by the venom gland.

It localises to the secreted. Postsynaptic neurotoxin. The sequence is that of U4-theraphotoxin-Hhn1s from Cyriopagopus hainanus (Chinese bird spider).